An 88-amino-acid polypeptide reads, in one-letter code: U2-ctenitoxin-Pn1a (88 aa).

The N-terminal stretch at 1–17 is a signal peptide; that stretch reads MKVAILILSILVLAVAS. The propeptide occupies 18–34; the sequence is ETIEEYRDDFAVEELER. Intrachain disulfides connect cysteine 37-cysteine 51, cysteine 44-cysteine 57, cysteine 48-cysteine 86, cysteine 50-cysteine 71, and cysteine 59-cysteine 69. Residue lysine 88 is a propeptide.

Expressed by the venom gland.

It is found in the secreted. Functionally, inhibits voltage-gated sodium channels (Nav). Causes scratching, lacrimation, hypersalivation, sweating and agitation followed by spastic paralysis of the anterior and posterior extremities and death at dose levels of 1.62 mg/mouse. Insecticidal to the larval and adult forms of the house fly. The sequence is that of U2-ctenitoxin-Pn1a from Phoneutria nigriventer (Brazilian armed spider).